Consider the following 58-residue polypeptide: Small ribosomal subunit protein bS21 (58 aa).

This sequence belongs to the bacterial ribosomal protein bS21 family.

This is Small ribosomal subunit protein bS21 from Streptococcus pyogenes serotype M49 (strain NZ131).